Consider the following 504-residue polypeptide: Taurochenodeoxycholic 6 alpha-hydroxylase (504 aa).

2 consecutive transmembrane segments (helical) span residues Leu6–Leu26 and Ala110–Gly130. Cys451 contributes to the heme binding site.

Belongs to the cytochrome P450 family. Heme is required as a cofactor. In terms of tissue distribution, primarily expressed in liver. Low expression in kidney.

It localises to the endoplasmic reticulum membrane. The catalysed reaction is taurochenodeoxycholate + reduced [NADPH--hemoprotein reductase] + O2 = taurohyocholate + oxidized [NADPH--hemoprotein reductase] + H2O + H(+). It carries out the reaction lithocholate + reduced [NADPH--hemoprotein reductase] + O2 = hyodeoxycholate + oxidized [NADPH--hemoprotein reductase] + H2O + H(+). Functionally, catalyzes the 6 alpha hydroxylation oxidation of taurodeoxycholate to produce the pig specific bile acid taurohyocholic acid. The protein is Taurochenodeoxycholic 6 alpha-hydroxylase (CYP4A21) of Sus scrofa (Pig).